The primary structure comprises 216 residues: MELNKYIDHTLLKPTASEKDIIKICNEAKEYHFASVCVNPCNVSLVRKELKGSDVKVCSVISFPFGASSTEVKVEEAKKAIEAGAEEIDMVINVGKLLEGDLEYTQNEVSAITKACHEKNVLLKVIVETCYLEEKNIADICAIIEKAGADFIKTSTGYGSRGASVEDIKLFKKYLKKDTKIKASGGVRTREDAETYIGLGCSRIGASSGIAIVTGK.

The active-site Proton donor/acceptor is Asp-89. The Schiff-base intermediate with acetaldehyde role is filled by Lys-153. Lys-182 (proton donor/acceptor) is an active-site residue.

Belongs to the DeoC/FbaB aldolase family. DeoC type 1 subfamily.

It localises to the cytoplasm. It carries out the reaction 2-deoxy-D-ribose 5-phosphate = D-glyceraldehyde 3-phosphate + acetaldehyde. It participates in carbohydrate degradation; 2-deoxy-D-ribose 1-phosphate degradation; D-glyceraldehyde 3-phosphate and acetaldehyde from 2-deoxy-alpha-D-ribose 1-phosphate: step 2/2. Functionally, catalyzes a reversible aldol reaction between acetaldehyde and D-glyceraldehyde 3-phosphate to generate 2-deoxy-D-ribose 5-phosphate. This is Deoxyribose-phosphate aldolase from Treponema denticola (strain ATCC 35405 / DSM 14222 / CIP 103919 / JCM 8153 / KCTC 15104).